The sequence spans 331 residues: Holliday junction branch migration complex subunit RuvB (331 aa).

Positions 1–182 (MSNDTLHKYE…FGIPLHLEFY (182 aa)) are large ATPase domain (RuvB-L). ATP contacts are provided by residues Leu21, Arg22, Gly63, Lys66, Thr67, Thr68, 129 to 131 (EDY), Arg172, Tyr182, and Arg219. Thr67 is a Mg(2+) binding site. The interval 183-254 (SVDELVLVIK…FANSALFRLG (72 aa)) is small ATPAse domain (RuvB-S). Residues 257 to 331 (GAGFDKMDLK…FEYLLSSKYI (75 aa)) form a head domain (RuvB-H) region. Residues Arg310 and Arg315 each coordinate DNA.

Belongs to the RuvB family. Homohexamer. Forms an RuvA(8)-RuvB(12)-Holliday junction (HJ) complex. HJ DNA is sandwiched between 2 RuvA tetramers; dsDNA enters through RuvA and exits via RuvB. An RuvB hexamer assembles on each DNA strand where it exits the tetramer. Each RuvB hexamer is contacted by two RuvA subunits (via domain III) on 2 adjacent RuvB subunits; this complex drives branch migration. In the full resolvosome a probable DNA-RuvA(4)-RuvB(12)-RuvC(2) complex forms which resolves the HJ.

Its subcellular location is the cytoplasm. The catalysed reaction is ATP + H2O = ADP + phosphate + H(+). Its function is as follows. The RuvA-RuvB-RuvC complex processes Holliday junction (HJ) DNA during genetic recombination and DNA repair, while the RuvA-RuvB complex plays an important role in the rescue of blocked DNA replication forks via replication fork reversal (RFR). RuvA specifically binds to HJ cruciform DNA, conferring on it an open structure. The RuvB hexamer acts as an ATP-dependent pump, pulling dsDNA into and through the RuvAB complex. RuvB forms 2 homohexamers on either side of HJ DNA bound by 1 or 2 RuvA tetramers; 4 subunits per hexamer contact DNA at a time. Coordinated motions by a converter formed by DNA-disengaged RuvB subunits stimulates ATP hydrolysis and nucleotide exchange. Immobilization of the converter enables RuvB to convert the ATP-contained energy into a lever motion, pulling 2 nucleotides of DNA out of the RuvA tetramer per ATP hydrolyzed, thus driving DNA branch migration. The RuvB motors rotate together with the DNA substrate, which together with the progressing nucleotide cycle form the mechanistic basis for DNA recombination by continuous HJ branch migration. Branch migration allows RuvC to scan DNA until it finds its consensus sequence, where it cleaves and resolves cruciform DNA. This chain is Holliday junction branch migration complex subunit RuvB, found in Anaplasma marginale (strain Florida).